The sequence spans 238 residues: 7-cyano-7-deazaguanine synthase 1 (238 aa).

ATP is bound at residue 14-24 (FSGGQDSATCL). Residues Cys-202, Cys-217, Cys-220, and Cys-223 each contribute to the Zn(2+) site.

This sequence belongs to the QueC family. Zn(2+) is required as a cofactor.

The catalysed reaction is 7-carboxy-7-deazaguanine + NH4(+) + ATP = 7-cyano-7-deazaguanine + ADP + phosphate + H2O + H(+). It functions in the pathway purine metabolism; 7-cyano-7-deazaguanine biosynthesis. Functionally, catalyzes the ATP-dependent conversion of 7-carboxy-7-deazaguanine (CDG) to 7-cyano-7-deazaguanine (preQ(0)). The sequence is that of 7-cyano-7-deazaguanine synthase 1 from Rhodopseudomonas palustris (strain HaA2).